A 376-amino-acid polypeptide reads, in one-letter code: UDP-N-acetylglucosamine 2-epimerase (376 aa).

Residues Arg10, Lys15, Asp95, Glu117, His213, Gln271, Phe276, 290–292, Glu296, and Arg313 contribute to the substrate site; that span reads SGG.

The protein belongs to the UDP-N-acetylglucosamine 2-epimerase family. In terms of assembly, homodimer.

It is found in the cytoplasm. The enzyme catalyses UDP-N-acetyl-alpha-D-glucosamine = UDP-N-acetyl-alpha-D-mannosamine. The protein operates within bacterial outer membrane biogenesis; enterobacterial common antigen biosynthesis. Its function is as follows. Catalyzes the reversible epimerization at C-2 of UDP-N-acetylglucosamine (UDP-GlcNAc) and thereby provides bacteria with UDP-N-acetylmannosamine (UDP-ManNAc), the activated donor of ManNAc residues. This chain is UDP-N-acetylglucosamine 2-epimerase, found in Yersinia pestis.